A 500-amino-acid polypeptide reads, in one-letter code: ADP,ATP carrier protein 5 (500 aa).

The next 11 helical transmembrane spans lie at 26 to 46 (LGKFIPISALMFCILFNQNIL), 62 to 82 (IAGFAKVYCVTPVAALFVIIY), 94 to 114 (IFYYLSAFFISCFILFAFVIY), 149 to 169 (YIVYYSLAELWPNIFYVLLFW), 184 to 204 (FYTLFSLFGNSSLILVGFLMM), 224 to 244 (ITLVQVSTTIIAIVAIICCLL), 287 to 307 (LWLLLICSAAFGFAINLVEAV), 328 to 348 (LYILWTGVAIIVMTIIGNNVM), 357 to 377 (AVISPVIIMVTGVLFFGLIVF), 381 to 401 (ILSLFDGAILMSPLALAVSIG), and 469 to 489 (SISPILMVVFTFVCFAWIYAV).

It belongs to the ADP/ATP translocase tlc family.

The protein localises to the cell membrane. Its function is as follows. Provides the rickettsial cell with host ATP in exchange for rickettsial ADP. This is an obligate exchange system. This energy acquiring activity is an important component of rickettsial parasitism. In Rickettsia prowazekii (strain Madrid E), this protein is ADP,ATP carrier protein 5 (tlcE).